Reading from the N-terminus, the 438-residue chain is Gamma-glutamyl phosphate reductase (438 aa).

Belongs to the gamma-glutamyl phosphate reductase family.

The protein resides in the cytoplasm. It catalyses the reaction L-glutamate 5-semialdehyde + phosphate + NADP(+) = L-glutamyl 5-phosphate + NADPH + H(+). It participates in amino-acid biosynthesis; L-proline biosynthesis; L-glutamate 5-semialdehyde from L-glutamate: step 2/2. Catalyzes the NADPH-dependent reduction of L-glutamate 5-phosphate into L-glutamate 5-semialdehyde and phosphate. The product spontaneously undergoes cyclization to form 1-pyrroline-5-carboxylate. This chain is Gamma-glutamyl phosphate reductase, found in Prochlorococcus marinus (strain MIT 9313).